A 239-amino-acid polypeptide reads, in one-letter code: LexA repressor (239 aa).

Residues 27–47 (FDEMKDALDLASKSGIHRLIT) constitute a DNA-binding region (H-T-H motif). Catalysis depends on for autocatalytic cleavage activity residues Ser159 and Lys197.

This sequence belongs to the peptidase S24 family. In terms of assembly, homodimer.

It catalyses the reaction Hydrolysis of Ala-|-Gly bond in repressor LexA.. In terms of biological role, represses a number of genes involved in the response to DNA damage (SOS response), including recA and lexA. In the presence of single-stranded DNA, RecA interacts with LexA causing an autocatalytic cleavage which disrupts the DNA-binding part of LexA, leading to derepression of the SOS regulon and eventually DNA repair. The sequence is that of LexA repressor from Rhizobium radiobacter (Agrobacterium tumefaciens).